A 533-amino-acid polypeptide reads, in one-letter code: Beta-xylosidase (533 aa).

The Proton acceptor role is filled by aspartate 14. The active-site Proton donor is the glutamate 186.

The protein belongs to the glycosyl hydrolase 43 family. In terms of assembly, homodimer.

The protein resides in the cell membrane. It catalyses the reaction Hydrolysis of (1-&gt;4)-beta-D-xylans, to remove successive D-xylose residues from the non-reducing termini.. In Bacillus subtilis (strain 168), this protein is Beta-xylosidase (xynB).